A 122-amino-acid chain; its full sequence is MVQQYTRLNVADNTGAKKIMCINVLGGSHKIQAKVGDVIVAAVKKSSPDAQAKSGTVVKAVVVRITKPYARPDGSYIKFDDNAAVILNDKMEPKGTRIFGPVARELRDKKFTKILSLAPEVL.

This sequence belongs to the universal ribosomal protein uL14 family. In terms of assembly, part of the 50S ribosomal subunit. Forms a cluster with proteins L3 and L19. In the 70S ribosome, L14 and L19 interact and together make contacts with the 16S rRNA in bridges B5 and B8.

Its function is as follows. Binds to 23S rRNA. Forms part of two intersubunit bridges in the 70S ribosome. This is Large ribosomal subunit protein uL14 from Dehalococcoides mccartyi (strain ATCC BAA-2100 / JCM 16839 / KCTC 5957 / BAV1).